The primary structure comprises 114 residues: Protein S100-A9 (114 aa).

Thr-2 carries the post-translational modification Blocked amino end (Thr). The residue at position 3 (Cys-3) is an S-nitrosocysteine; transient. 2 consecutive EF-hand domains span residues 12–47 (IETI…DLQN) and 54–89 (KNEK…LTWA). Position 20 (His-20) interacts with Zn(2+). The Ca(2+) site is built by Ser-23, Leu-26, and His-28. Position 30 (Asp-30) interacts with Zn(2+). Thr-31, Glu-36, Asp-67, Asn-69, Asp-71, Gln-73, and Glu-78 together coordinate Ca(2+). Zn(2+) contacts are provided by His-91 and His-95. The segment covering 93-102 (KMHEGDEGPG) has biased composition (basic and acidic residues). The interval 93–114 (KMHEGDEGPGHHHKPGLGEGTP) is disordered. The residue at position 105 (His-105) is a Pros-methylhistidine. Phosphothreonine; by MAPK14 is present on Thr-113.

As to quaternary structure, homodimer. Preferentially exists as a heterodimer or heterotetramer with S100A8 known as calprotectin (S100A8/A9). S100A9 interacts with ATP2A2. S100A9 interacts with AGER, and with the heterodimeric complex formed by TLR4 and LY96 in the presence of calcium and/or zinc ions. S100A9 binds quinoline-3-carboxamides in the presence of calcium and/or zinc ions. S100A9 interacts with amyloid-beta protein 40. Calprotectin (S100A8/9) interacts with CEACAM3 and tubulin filaments in a calcium-dependent manner. Heterotetrameric calprotectin (S100A8/A9) interacts with ANXA6 and associates with tubulin filaments in activated monocytes. Calprotectin (S100A8/9) interacts with NCF2/P67PHOX, RAC1, RAC2, CYBA and CYBB. Calprotectin (S100A8/9) interacts with NOS2 to form the iNOS-S100A8/A9 transnitrosylase complex; induced by LDL(ox). Calprotectin (S100A8/9) interacts with CD69. In terms of processing, phosphorylated. Phosphorylation inhibits activation of tubulin polymerization. Post-translationally, S-nitrosylation of Cys-3 is implicated in LDL(ox)-induced S-nitrosylation of GAPDH at 'Cys-247' through a transnitrosylase mechanism involving a iNOS-S100A8/9 complex. Methylation at His-105 by METTL9 reduces zinc-binding without affecting heterodimerization with S100A8. Calprotectin (S100A8/9) is predominantly expressed in myeloid cells. Except for inflammatory conditions, the expression is restricted to a specific stage of myeloid differentiation since both proteins are expressed in circulating neutrophils and monocytes but are absent in normal tissue macrophages and lymphocytes. Under chronic inflammatory conditions, such as psoriasis and malignant disorders, also expressed in the epidermis. Found in high concentrations at local sites of inflammation or in the serum of patients with inflammatory diseases such as rheumatoid, cystic fibrosis, inflammatory bowel disease, Crohn's disease, giant cell arteritis, cystic fibrosis, Sjogren's syndrome, systemic lupus erythematosus, and progressive systemic sclerosis. Involved in the formation and deposition of amyloids in the aging prostate known as corpora amylacea inclusions. Strongly up-regulated in many tumors, including gastric, esophageal, colon, pancreatic, bladder, ovarian, thyroid, breast and skin cancers.

The protein resides in the secreted. It localises to the cytoplasm. It is found in the cytoskeleton. The protein localises to the cell membrane. In terms of biological role, S100A9 is a calcium- and zinc-binding protein which plays a prominent role in the regulation of inflammatory processes and immune response. It can induce neutrophil chemotaxis, adhesion, can increase the bactericidal activity of neutrophils by promoting phagocytosis via activation of SYK, PI3K/AKT, and ERK1/2 and can induce degranulation of neutrophils by a MAPK-dependent mechanism. Predominantly found as calprotectin (S100A8/A9) which has a wide plethora of intra- and extracellular functions. The intracellular functions include: facilitating leukocyte arachidonic acid trafficking and metabolism, modulation of the tubulin-dependent cytoskeleton during migration of phagocytes and activation of the neutrophilic NADPH-oxidase. Also participates in regulatory T-cell differentiation together with CD69. Activates NADPH-oxidase by facilitating the enzyme complex assembly at the cell membrane, transferring arachidonic acid, an essential cofactor, to the enzyme complex and S100A8 contributes to the enzyme assembly by directly binding to NCF2/P67PHOX. The extracellular functions involve pro-inflammatory, antimicrobial, oxidant-scavenging and apoptosis-inducing activities. Its pro-inflammatory activity includes recruitment of leukocytes, promotion of cytokine and chemokine production, and regulation of leukocyte adhesion and migration. Acts as an alarmin or a danger associated molecular pattern (DAMP) molecule and stimulates innate immune cells via binding to pattern recognition receptors such as Toll-like receptor 4 (TLR4) and receptor for advanced glycation endproducts (AGER). Binding to TLR4 and AGER activates the MAP-kinase and NF-kappa-B signaling pathways resulting in the amplification of the pro-inflammatory cascade. Has antimicrobial activity towards bacteria and fungi and exerts its antimicrobial activity probably via chelation of Zn(2+) which is essential for microbial growth. Can induce cell death via autophagy and apoptosis and this occurs through the cross-talk of mitochondria and lysosomes via reactive oxygen species (ROS) and the process involves BNIP3. Can regulate neutrophil number and apoptosis by an anti-apoptotic effect; regulates cell survival via ITGAM/ITGB and TLR4 and a signaling mechanism involving MEK-ERK. Its role as an oxidant scavenger has a protective role in preventing exaggerated tissue damage by scavenging oxidants. Can act as a potent amplifier of inflammation in autoimmunity as well as in cancer development and tumor spread. Has transnitrosylase activity; in oxidatively-modified low-densitity lipoprotein (LDL(ox))-induced S-nitrosylation of GAPDH on 'Cys-247' proposed to transfer the NO moiety from NOS2/iNOS to GAPDH via its own S-nitrosylated Cys-3. The iNOS-S100A8/A9 transnitrosylase complex is proposed to also direct selective inflammatory stimulus-dependent S-nitrosylation of multiple targets such as ANXA5, EZR, MSN and VIM by recognizing a [IL]-x-C-x-x-[DE] motif. The protein is Protein S100-A9 of Homo sapiens (Human).